Here is a 337-residue protein sequence, read N- to C-terminus: Phosphate acyltransferase (337 aa).

This sequence belongs to the PlsX family. In terms of assembly, homodimer. Probably interacts with PlsY.

Its subcellular location is the cytoplasm. It catalyses the reaction a fatty acyl-[ACP] + phosphate = an acyl phosphate + holo-[ACP]. It participates in lipid metabolism; phospholipid metabolism. Catalyzes the reversible formation of acyl-phosphate (acyl-PO(4)) from acyl-[acyl-carrier-protein] (acyl-ACP). This enzyme utilizes acyl-ACP as fatty acyl donor, but not acyl-CoA. The sequence is that of Phosphate acyltransferase from Listeria welshimeri serovar 6b (strain ATCC 35897 / DSM 20650 / CCUG 15529 / CIP 8149 / NCTC 11857 / SLCC 5334 / V8).